The sequence spans 444 residues: F-box protein At1g53790 (444 aa).

The region spanning Val76–Met125 is the F-box domain.

The protein is F-box protein At1g53790 of Arabidopsis thaliana (Mouse-ear cress).